A 61-amino-acid polypeptide reads, in one-letter code: Truncated Cytokine response-modifying protein B (61 aa).

Its function is as follows. The protein is truncated in this strain and presumably inactive. It has similarities with variola virus CrmB, but the product is inactivated due to several premature stop codon. In Bos taurus (Bovine), this protein is Truncated Cytokine response-modifying protein B.